The sequence spans 322 residues: MDIHFEEGVLSPSATDMRPEPPNSLDLNGSHPRRIKLTAPNINLSLDQSEGSILSDDNLDSPDEIDINVDELDTPDEADSFEYPGHEDPMANRSSGQESESIPEYTAEEEREDNRLWRTVVIGEQEQRIDMKVIEPYRRVISHGGYYGDGLNAIIVFAACFLPDSSRADYHYVMENLFLYVISTLELMVAEDYMIVYLNGATPRRKMPGLGWMKKCYQMIDRRLRKNLKSFIIVHPSWFIRTILAVTRPFISSKFSSKIKYVSSLSELSGLIPMDCIHIPESIIKYDEEKSFKRSVRTSCLYNDPEMTSMEKDIDMKLKEKP.

The interval 1 to 110 (MDIHFEEGVL…SIPEYTAEEE (110 aa)) is disordered. Over residues 40-52 (PNINLSLDQSEGS) the composition is skewed to polar residues. Positions 57-80 (DNLDSPDEIDINVDELDTPDEADS) are enriched in acidic residues. A CRAL-TRIO domain is found at 130 to 291 (DMKVIEPYRR…SIIKYDEEKS (162 aa)).

It is found in the cytoplasm. Functionally, may play an important role in regulating differentiation, survival and aggressiveness of the tumor cells. The chain is Protein prune homolog 2 (Prune2) from Rattus norvegicus (Rat).